Here is a 435-residue protein sequence, read N- to C-terminus: AP-2 complex subunit mu (435 aa).

Residue Ser45 is modified to Phosphoserine. Phosphothreonine is present on Thr156. The region spanning 170–434 (RNELFLDVLE…IGRSGIYETR (265 aa)) is the MHD domain. A 1,2-diacyl-sn-glycero-3-phospho-(1D-myo-inositol-3,4,5-trisphosphate) is bound by residues Lys341, Lys345, and Lys354.

Belongs to the adaptor complexes medium subunit family. In terms of assembly, adaptor protein complex 2 (AP-2) is a heterotetramer composed of two large adaptins (alpha-type subunit AP2A1 or AP2A2 and beta-type subunit AP2B1), a medium adaptin (mu-type subunit AP2M1) and a small adaptin (sigma-type subunit AP2S1). Interacts with ATP6V1H and MEGF10. Interacts with EGFR and TTGN1. Interacts with F2R. Interacts with PIP5K1C; tyrosine phosphorylation of PIP5K1C weakens the interaction. Interacts with KIAA0319; required for clathrin-mediated endocytosis of KIAA0319. Interacts with DVL2 (via DEP domain). Interacts with KCNQ1; mediates estrogen-induced internalization via clathrin-coated vesicles. Interacts with P2RX4 (via internalization motif). Together with AP2A1 or AP2A2 and AP2B1, it interacts with ADAM10; this interaction facilitates ADAM10 endocytosis from the plasma membrane during long-term potentiation in hippocampal neurons. Probably interacts with ACE2 (via endocytic sorting signal motif); the interaction is inhibited by ACE2 phosphorylation. Interacts with RALBP1; the interaction is direct. Interacts with TMEM106B (via N-terminus). Phosphorylation at Thr-156 increases the affinity of the AP-2 complex for cargo membrane proteins during the initial stages of endocytosis.

The protein localises to the cell membrane. Its subcellular location is the membrane. It localises to the coated pit. In terms of biological role, component of the adaptor protein complex 2 (AP-2). Adaptor protein complexes function in protein transport via transport vesicles in different membrane traffic pathways. Adaptor protein complexes are vesicle coat components and appear to be involved in cargo selection and vesicle formation. AP-2 is involved in clathrin-dependent endocytosis in which cargo proteins are incorporated into vesicles surrounded by clathrin (clathrin-coated vesicles, CCVs) which are destined for fusion with the early endosome. The clathrin lattice serves as a mechanical scaffold but is itself unable to bind directly to membrane components. Clathrin-associated adaptor protein (AP) complexes which can bind directly to both the clathrin lattice and to the lipid and protein components of membranes are considered to be the major clathrin adaptors contributing the CCV formation. AP-2 also serves as a cargo receptor to selectively sort the membrane proteins involved in receptor-mediated endocytosis. AP-2 seems to play a role in the recycling of synaptic vesicle membranes from the presynaptic surface. AP-2 recognizes Y-X-X-[FILMV] (Y-X-X-Phi) and [ED]-X-X-X-L-[LI] endocytosis signal motifs within the cytosolic tails of transmembrane cargo molecules. AP-2 may also play a role in maintaining normal post-endocytic trafficking through the ARF6-regulated, non-clathrin pathway. During long-term potentiation in hippocampal neurons, AP-2 is responsible for the endocytosis of ADAM10. The AP-2 mu subunit binds to transmembrane cargo proteins; it recognizes the Y-X-X-Phi motifs. The surface region interacting with to the Y-X-X-Phi motif is inaccessible in cytosolic AP-2, but becomes accessible through a conformational change following phosphorylation of AP-2 mu subunit at Thr-156 in membrane-associated AP-2. The membrane-specific phosphorylation event appears to involve assembled clathrin which activates the AP-2 mu kinase AAK1. Plays a role in endocytosis of frizzled family members upon Wnt signaling. This Bos taurus (Bovine) protein is AP-2 complex subunit mu (AP2M1).